A 148-amino-acid polypeptide reads, in one-letter code: MNKPARQLRIREIIQQEHVENQHDLLRLLKEKGVKVAQATLSRDCAELGIIRSKTHAGYRLLFAEEHSGRIIKGLVGMEVVSVAANETSVIVRTLPGRAHGVGSWLDQFHSPLILGTIAGDDTVLVIPDSVENISALISYIHKNLSTN.

This sequence belongs to the ArgR family.

Its subcellular location is the cytoplasm. The protein operates within amino-acid biosynthesis; L-arginine biosynthesis [regulation]. Functionally, regulates arginine biosynthesis genes. The protein is Arginine repressor of Chlorobium phaeovibrioides (strain DSM 265 / 1930) (Prosthecochloris vibrioformis (strain DSM 265)).